Here is a 729-residue protein sequence, read N- to C-terminus: DNA topoisomerase 3 (729 aa).

One can recognise a Toprim domain in the interval 3–136; that stretch reads KSVVIAEKPS…IKRLWISSVT (134 aa). Residues glutamate 9 and aspartate 105 each contribute to the Mg(2+) site. In terms of domain architecture, Topo IA-type catalytic spans 153–594; the sequence is YDNLYASAVA…EMKNYTKEIV (442 aa). An interaction with DNA region spans residues 187–192; sequence NCGRVQ. Tyrosine 310 functions as the O-(5'-phospho-DNA)-tyrosine intermediate in the catalytic mechanism. The segment covering 686 to 713 has biased composition (basic and acidic residues); that stretch reads ERRKKESGNKADKRDVQKYMKQQKKEEE. Positions 686–718 are disordered; that stretch reads ERRKKESGNKADKRDVQKYMKQQKKEEEPLNNP.

Belongs to the type IA topoisomerase family. The cofactor is Mg(2+).

The catalysed reaction is ATP-independent breakage of single-stranded DNA, followed by passage and rejoining.. Functionally, releases the supercoiling and torsional tension of DNA, which is introduced during the DNA replication and transcription, by transiently cleaving and rejoining one strand of the DNA duplex. Introduces a single-strand break via transesterification at a target site in duplex DNA. The scissile phosphodiester is attacked by the catalytic tyrosine of the enzyme, resulting in the formation of a DNA-(5'-phosphotyrosyl)-enzyme intermediate and the expulsion of a 3'-OH DNA strand. The free DNA strand then undergoes passage around the unbroken strand, thus removing DNA supercoils. Finally, in the religation step, the DNA 3'-OH attacks the covalent intermediate to expel the active-site tyrosine and restore the DNA phosphodiester backbone. This is DNA topoisomerase 3 from Bacillus thuringiensis subsp. konkukian (strain 97-27).